The primary structure comprises 225 residues: UPF0758 protein AZOSEA04420 (225 aa).

The MPN domain occupies 102–225 (VFESPLAVRN…PLSFAERGLL (124 aa)). Zn(2+)-binding residues include H173, H175, and D186. A JAMM motif motif is present at residues 173–186 (HNHPSGAAEPSPAD).

The protein belongs to the UPF0758 family.

The protein is UPF0758 protein AZOSEA04420 of Aromatoleum aromaticum (strain DSM 19018 / LMG 30748 / EbN1) (Azoarcus sp. (strain EbN1)).